A 452-amino-acid chain; its full sequence is MKTITEFQNKKVLILGLAKSGEAAARLLARLGAIVTVNDSKPFEENPAAQALLEEGIRVICGSHPLELLDEDFYCMVKNPGIRYDNPMVVCALDKAISILTEVELAYLVSEAPIIGITGSNGKTTTTTMIADVLNAGNQSALLAGNIGFPASEVAQAATAKDILVMELSSFQLLGTEQFQPHIAVITNLVPTHLDYHGSFEDYIAAKWRIQHRMTDKDYLVLNADQELVKSLAQKTKASPVFFSTKEKVDGAYLADGYLYFKEEQVMSAAELGLPGRHNIENALATIAVAKLRGISNQVISKTLSHFSGVKHRLQLVGTLNQVTFYNDSKSTNILACQKALSGFDNSRVILIAGGLDRGNEFDELVPDLVGLKKMILLGESAERMKRAADKAGVSYLDAKDVAAATKIAFEQAKPGDIILLSPANASWDMYPSFESRGDEFLAAYDALKGEA.

119–125 (GSNGKTT) contributes to the ATP binding site.

Belongs to the MurCDEF family.

The protein localises to the cytoplasm. It catalyses the reaction UDP-N-acetyl-alpha-D-muramoyl-L-alanine + D-glutamate + ATP = UDP-N-acetyl-alpha-D-muramoyl-L-alanyl-D-glutamate + ADP + phosphate + H(+). The protein operates within cell wall biogenesis; peptidoglycan biosynthesis. In terms of biological role, cell wall formation. Catalyzes the addition of glutamate to the nucleotide precursor UDP-N-acetylmuramoyl-L-alanine (UMA). The protein is UDP-N-acetylmuramoylalanine--D-glutamate ligase of Streptococcus equi subsp. zooepidemicus (strain MGCS10565).